The sequence spans 96 residues: MKFRFNGASNVELNNREIELTREEVEGSSIATVGDALRYLFGKYAETRDSFFDHHGELVHGTICIINKMDWEILEKERSPVKHGDHIVLISTIHGG.

A 1-thioglycine modification is found at glycine 96. Glycine 96 is covalently cross-linked (Glycyl lysine isopeptide (Gly-Lys) (interchain with K-? in acceptor proteins)).

This sequence belongs to the URM1 family. In terms of processing, C-terminal thiocarboxylation occurs in 2 steps, it is first acyl-adenylated (-COAMP) via the hesA/moeB/thiF part of UBA4, then thiocarboxylated (-COSH) via the rhodanese domain of UBA4.

Its subcellular location is the cytoplasm. The protein operates within tRNA modification; 5-methoxycarbonylmethyl-2-thiouridine-tRNA biosynthesis. Its function is as follows. Acts as a sulfur carrier required for 2-thiolation of mcm(5)S(2)U at tRNA wobble positions of cytosolic tRNA(Lys), tRNA(Glu) and tRNA(Gln). Serves as sulfur donor in tRNA 2-thiolation reaction by being thiocarboxylated (-COSH) at its C-terminus by the MOCS3 homolog UBA4. The sulfur is then transferred to tRNA to form 2-thiolation of mcm(5)S(2)U. Prior mcm(5) tRNA modification by the elongator complex is required for 2-thiolation. Also acts as a ubiquitin-like protein (UBL) that is covalently conjugated via an isopeptide bond to lysine residues of target proteins such as AHP1. The thiocarboxylated form serves as substrate for conjugation and oxidative stress specifically induces the formation of UBL-protein conjugates. This Encephalitozoon cuniculi (strain GB-M1) (Microsporidian parasite) protein is Ubiquitin-related modifier 1.